Here is a 325-residue protein sequence, read N- to C-terminus: DNA-directed RNA polymerase subunit alpha (325 aa).

An alpha N-terminal domain (alpha-NTD) region spans residues 1-231 (MQTSLLKPKI…DQLSVFAALE (231 aa)). The interval 246–325 (IDPILLRPVD…ENWPPAGLDK (80 aa)) is alpha C-terminal domain (alpha-CTD).

The protein belongs to the RNA polymerase alpha chain family. Homodimer. The RNAP catalytic core consists of 2 alpha, 1 beta, 1 beta' and 1 omega subunit. When a sigma factor is associated with the core the holoenzyme is formed, which can initiate transcription.

It catalyses the reaction RNA(n) + a ribonucleoside 5'-triphosphate = RNA(n+1) + diphosphate. In terms of biological role, DNA-dependent RNA polymerase catalyzes the transcription of DNA into RNA using the four ribonucleoside triphosphates as substrates. The sequence is that of DNA-directed RNA polymerase subunit alpha from Paraburkholderia phymatum (strain DSM 17167 / CIP 108236 / LMG 21445 / STM815) (Burkholderia phymatum).